Consider the following 259-residue polypeptide: Peroxisomal membrane protein 11B (259 aa).

An N6-acetyllysine modification is found at Lys-43. The interaction with PEX19, PEX11G and FIS1 and peroxisome targeting stretch occupies residues 211–259 (VVRNACDLFIPLDKLGLWRCGPGIVGLCGLVSSILSILTLIYPWLRLKP). The chain crosses the membrane as a helical span at residues 234–254 (IVGLCGLVSSILSILTLIYPW).

This sequence belongs to the peroxin-11 family. Homodimer. Heterodimer with PEX11G. Interacts with PEX19. Interacts with FIS1.

The protein resides in the peroxisome membrane. Functionally, involved in peroxisomal proliferation. May regulate peroxisome division by recruiting the dynamin-related GTPase DNM1L to the peroxisomal membrane. Promotes membrane protrusion and elongation on the peroxisomal surface. This is Peroxisomal membrane protein 11B (PEX11B) from Pongo abelii (Sumatran orangutan).